A 400-amino-acid polypeptide reads, in one-letter code: Deoxyguanosinetriphosphate triphosphohydrolase-like protein (400 aa).

The region spanning 73-215 (RLTHSIEVSQ…AAIADDIAYN (143 aa)) is the HD domain.

Belongs to the dGTPase family. Type 2 subfamily.

In Bartonella quintana (strain Toulouse) (Rochalimaea quintana), this protein is Deoxyguanosinetriphosphate triphosphohydrolase-like protein.